The primary structure comprises 396 residues: Gap junction gamma-1 protein (396 aa).

Over 1-22 (MSWSFLTRLLEEIHNHSTFVGK) the chain is Cytoplasmic. A helical transmembrane segment spans residues 23 to 45 (IWLTVLIVFRIVLTAVGGESIYY). Residues 46 to 75 (DEQSKFVCNTEQPGCENVCYDAFAPLSHVR) are Extracellular-facing. A helical membrane pass occupies residues 76–95 (FWVFQIILVATPSVMYLGYA). The Cytoplasmic segment spans residues 96–175 (IHKIAKMEHG…RRIREDGLMK (80 aa)). The interval 145 to 165 (ELESEKENKEQNQSKPKHDGR) is disordered. A compositionally biased stretch (basic and acidic residues) spans 147 to 156 (ESEKENKEQN). The chain crosses the membrane as a helical span at residues 176–198 (IYVLQLLARTMFEVGFLIGQYFL). Over 199–228 (YGFQVHPFYVCSRVPCPHKIDCFISRPTEK) the chain is Extracellular. A helical transmembrane segment spans residues 229 to 248 (TIFLLIMYGVTGLCLLLNIW). Over 249–396 (EMLHLGFGTI…SGDGKTSVWI (148 aa)) the chain is Cytoplasmic. The segment at 357–396 (NHQNNPHGPREKKAKVGSKAGSNKSSASSKSGDGKTSVWI) is disordered. The segment covering 373 to 396 (GSKAGSNKSSASSKSGDGKTSVWI) has biased composition (low complexity).

Belongs to the connexin family. Gamma-type subfamily. As to quaternary structure, a connexon is composed of a hexamer of connexins. Interacts with CNST.

The protein localises to the cell membrane. The protein resides in the cell junction. Its subcellular location is the gap junction. In terms of biological role, one gap junction consists of a cluster of closely packed pairs of transmembrane channels, the connexons, through which materials of low MW diffuse from one cell to a neighboring cell. This is Gap junction gamma-1 protein (GJC1) from Sus scrofa (Pig).